Consider the following 167-residue polypeptide: Mannose-specific lectin (167 aa).

The signal sequence occupies residues 1–24 (MAFSISSTMIFLLSLALFSTLVSA). The 114-residue stretch at 25–138 (DNHLLPGERL…PIFATGTNRF (114 aa)) folds into the Bulb-type lectin domain. Cysteine 53 and cysteine 76 form a disulfide bridge.

Homotetramer. In terms of tissue distribution, expressed in the pseudobulb, with highest levels of expression in the non-swollen internode (at protein level).

The protein resides in the secreted. Functionally, mannose-specific lectin. Shows agglutinating activity towards chicken erythrocytes. Has antifungal activity against A.alternata and Collectotrichum species. The protein is Mannose-specific lectin of Dendrobium findlayanum (Findlay's orchid).